A 321-amino-acid chain; its full sequence is Carbonic anhydrase, chloroplastic (321 aa).

A chloroplast-targeting transit peptide spans 1–100 (MSTASINSCL…AAARVDQITA (100 aa)).

This sequence belongs to the beta-class carbonic anhydrase family. In terms of assembly, homohexamer.

The protein resides in the plastid. Its subcellular location is the chloroplast stroma. It catalyses the reaction hydrogencarbonate + H(+) = CO2 + H2O. Functionally, reversible hydration of carbon dioxide. The protein is Carbonic anhydrase, chloroplastic of Nicotiana tabacum (Common tobacco).